The following is a 188-amino-acid chain: Trafficking protein particle complex subunit 5 (188 aa).

Ser10 carries the phosphoserine modification.

Belongs to the TRAPP small subunits family. BET3 subfamily. Component of the multisubunit TRAPP (transport protein particle) complex, which includes at least TRAPPC2, TRAPPC2L, TRAPPC3, TRAPPC3L, TRAPPC4, TRAPPC5, TRAPPC8, TRAPPC9, TRAPPC10, TRAPPC11 and TRAPPC12.

The protein localises to the golgi apparatus. It is found in the cis-Golgi network. It localises to the endoplasmic reticulum. May play a role in vesicular transport from endoplasmic reticulum to Golgi. The polypeptide is Trafficking protein particle complex subunit 5 (TRAPPC5) (Bos taurus (Bovine)).